Here is a 424-residue protein sequence, read N- to C-terminus: Dihydroorotase (424 aa).

His-61 and His-63 together coordinate Zn(2+). Residues 63–65 (HLR) and Asn-95 contribute to the substrate site. 3 residues coordinate Zn(2+): Asp-153, His-180, and His-233. Position 279 (Asn-279) interacts with substrate. A Zn(2+)-binding site is contributed by Asp-306. The active site involves Asp-306. His-310 contacts substrate.

The protein belongs to the metallo-dependent hydrolases superfamily. DHOase family. Class I DHOase subfamily. Requires Zn(2+) as cofactor.

The catalysed reaction is (S)-dihydroorotate + H2O = N-carbamoyl-L-aspartate + H(+). It functions in the pathway pyrimidine metabolism; UMP biosynthesis via de novo pathway; (S)-dihydroorotate from bicarbonate: step 3/3. Its function is as follows. Catalyzes the reversible cyclization of carbamoyl aspartate to dihydroorotate. The protein is Dihydroorotase of Pelobacter propionicus (strain DSM 2379 / NBRC 103807 / OttBd1).